The primary structure comprises 208 residues: FMN-dependent NADH:quinone oxidoreductase 4 (208 aa).

It belongs to the azoreductase type 1 family. In terms of assembly, homodimer. FMN serves as cofactor.

It catalyses the reaction 2 a quinone + NADH + H(+) = 2 a 1,4-benzosemiquinone + NAD(+). The catalysed reaction is N,N-dimethyl-1,4-phenylenediamine + anthranilate + 2 NAD(+) = 2-(4-dimethylaminophenyl)diazenylbenzoate + 2 NADH + 2 H(+). Functionally, quinone reductase that provides resistance to thiol-specific stress caused by electrophilic quinones. In terms of biological role, also exhibits azoreductase activity. Catalyzes the reductive cleavage of the azo bond in aromatic azo compounds to the corresponding amines. The chain is FMN-dependent NADH:quinone oxidoreductase 4 from Bacillus cereus (strain ATCC 10987 / NRS 248).